We begin with the raw amino-acid sequence, 904 residues long: HTH-type transcriptional regulator MalT (904 aa).

39-46 (CPAGYGKT) serves as a coordination point for ATP. The HTH luxR-type domain occupies 832-897 (ELIRTSPLTQ…EAVQQAQQLL (66 aa)). The segment at residues 856–875 (NDQIAGELAVAATTIKTHIR) is a DNA-binding region (H-T-H motif).

The protein belongs to the MalT family. As to quaternary structure, monomer in solution. Oligomerizes to an active state in the presence of the positive effectors ATP and maltotriose.

With respect to regulation, activated by ATP and maltotriose, which are both required for DNA binding. Its function is as follows. Positively regulates the transcription of the maltose regulon whose gene products are responsible for uptake and catabolism of malto-oligosaccharides. Specifically binds to the promoter region of its target genes, recognizing a short DNA motif called the MalT box. This is HTH-type transcriptional regulator MalT from Serratia proteamaculans (strain 568).